Reading from the N-terminus, the 139-residue chain is D-ribose pyranase (139 aa).

H20 functions as the Proton donor in the catalytic mechanism. Substrate-binding positions include D28, H106, and 128-130 (YAN).

This sequence belongs to the RbsD / FucU family. RbsD subfamily. Homodecamer.

The protein resides in the cytoplasm. The catalysed reaction is beta-D-ribopyranose = beta-D-ribofuranose. It participates in carbohydrate metabolism; D-ribose degradation; D-ribose 5-phosphate from beta-D-ribopyranose: step 1/2. Catalyzes the interconversion of beta-pyran and beta-furan forms of D-ribose. The sequence is that of D-ribose pyranase from Escherichia coli O127:H6 (strain E2348/69 / EPEC).